A 267-amino-acid chain; its full sequence is Proteasome assembly chaperone 2 (267 aa).

This sequence belongs to the PSMG2 family. Component of the 20S proteasome chaperone. Forms a heterodimer with PBA1 that binds to proteasome precursors.

Its subcellular location is the cytoplasm. Its function is as follows. Involved in 20S proteasome assembly. Required for maximal proteasome activity. Affects the chymotrypsin-like activity of the proteasome. Can be degraded by the proteasome. Involved in the endoplasmic reticulum-associated degradation (ERAD). The polypeptide is Proteasome assembly chaperone 2 (ADD66) (Saccharomyces cerevisiae (strain ATCC 204508 / S288c) (Baker's yeast)).